The sequence spans 510 residues: Secreted RxLR effector protein 24 (510 aa).

Residues 1–18 (MRGAFYVAIALLGSHTAA) form the signal peptide. A RxLR-dEER motif is present at residues 47-68 (RVLRERRDSKDKLTVHAGAEER).

It belongs to the RxLR effector family.

Its subcellular location is the secreted. The protein resides in the host nucleus. Functionally, secreted effector that acts as an elicitor that induces cell death in host plant cells. This is Secreted RxLR effector protein 24 from Plasmopara viticola (Downy mildew of grapevine).